Reading from the N-terminus, the 612-residue chain is Threonine--tRNA ligase (612 aa).

The tract at residues Asp218–Pro509 is catalytic. Positions 310, 361, and 486 each coordinate Zn(2+).

It belongs to the class-II aminoacyl-tRNA synthetase family. As to quaternary structure, homodimer. Zn(2+) is required as a cofactor.

Its subcellular location is the cytoplasm. The catalysed reaction is tRNA(Thr) + L-threonine + ATP = L-threonyl-tRNA(Thr) + AMP + diphosphate + H(+). Catalyzes the attachment of threonine to tRNA(Thr) in a two-step reaction: L-threonine is first activated by ATP to form Thr-AMP and then transferred to the acceptor end of tRNA(Thr). Also edits incorrectly charged L-seryl-tRNA(Thr). The protein is Threonine--tRNA ligase of Helicobacter pylori (strain P12).